A 453-amino-acid chain; its full sequence is Glutamate-rich protein 5 (453 aa).

Disordered stretches follow at residues 1–38 (MGCS…ALGR), 66–377 (NGVQ…EHPA), and 394–453 (TNEE…HSML). A compositionally biased stretch (basic and acidic residues) spans 11-21 (AGDDNRLRSAT). At serine 155 the chain carries Phosphoserine. Composition is skewed to polar residues over residues 230–243 (LQET…SQPL) and 271–283 (QETL…SQLR). Basic and acidic residues-rich tracts occupy residues 305-332 (EEEK…EHGG), 364-374 (IQPERTVESME), and 394-403 (TNEEDQHIEG). The segment covering 404–413 (ETGETVETEM) has biased composition (acidic residues). Residues 414-424 (ESEKVSEGAET) are compositionally biased toward basic and acidic residues.

The sequence is that of Glutamate-rich protein 5 (ERICH5) from Bos taurus (Bovine).